A 259-amino-acid polypeptide reads, in one-letter code: 3-deoxy-manno-octulosonate cytidylyltransferase (259 aa).

It belongs to the KdsB family.

It is found in the cytoplasm. The catalysed reaction is 3-deoxy-alpha-D-manno-oct-2-ulosonate + CTP = CMP-3-deoxy-beta-D-manno-octulosonate + diphosphate. It participates in nucleotide-sugar biosynthesis; CMP-3-deoxy-D-manno-octulosonate biosynthesis; CMP-3-deoxy-D-manno-octulosonate from 3-deoxy-D-manno-octulosonate and CTP: step 1/1. The protein operates within bacterial outer membrane biogenesis; lipopolysaccharide biosynthesis. In terms of biological role, activates KDO (a required 8-carbon sugar) for incorporation into bacterial lipopolysaccharide in Gram-negative bacteria. In Protochlamydia amoebophila (strain UWE25), this protein is 3-deoxy-manno-octulosonate cytidylyltransferase.